Consider the following 412-residue polypeptide: 5,5'-dehydrodivanillate O-demethylase ferredoxin reductase subunit (412 aa).

Positions 14, 49, 82, 130, 279, and 298 each coordinate FAD.

This sequence belongs to the FAD-dependent oxidoreductase family. In terms of assembly, monomer. The three-component monooxygenase is composed of an oxygenase (LigXa), a ferredoxin (LigXc) and a ferredoxin reductase (LigXd). It depends on FAD as a cofactor.

It catalyses the reaction 5,5'-dehydrodivanillate + NADH + O2 + H(+) = 2,2',3-trihydroxy-3'-methoxy-5,5'-dicarboxybiphenyl + formaldehyde + NAD(+) + H2O. Its function is as follows. Involved in the catabolism of 5,5'-dehydrodivanillate (DDVA), an intermediate in the biodegradation of lignin. Part of a three-component monooxygenase that catalyzes the O-demethylation of DDVA, leading to the formation of 2,2',3-trihydroxy-3'-methoxy-5,5'-dicarboxybiphenyl (OH-DDVA). LigXd probably transfers the electrons from NADH to LigXc. This Sphingobium sp. (strain NBRC 103272 / SYK-6) protein is 5,5'-dehydrodivanillate O-demethylase ferredoxin reductase subunit.